A 367-amino-acid chain; its full sequence is Outer membrane protein P2 (367 aa).

Positions 1–20 are cleaved as a signal peptide; the sequence is MKKTLAALIVGAFAASAANA.

Belongs to the Gram-negative porin family. Homotrimer.

The protein resides in the cell outer membrane. Its function is as follows. Forms pores that allow passive diffusion of small molecules across the outer membrane. In Haemophilus influenzae, this protein is Outer membrane protein P2 (ompP2).